A 397-amino-acid polypeptide reads, in one-letter code: MRQILVLLLFATLVYGLIRVPLKRQKSIRKTLKEKGKLSHIWTQQGIDMVQYTDSCSNDQAPSEPLINYMDVEYFGEISVGTPPQNFTVIFDTGSSNLWVPSVYCISQACAQHDRFQPQLSSTYESNGNNFSLQYGTGSLSGVIGIDAVTVEGILVQNQQFGESVSEPGSTFVDAEFDGILGLGYPSIAVGDCTPVFDNMIAQNLVELPMFSVYMSRNPNSAVGGELVFGGFDASRFSGQLNWVPVTNQGYWQIQLDNVQINGEVLFCSGGCQAIVDTGTSLITGPSSDIVQLQNIIGASAANGDYEVDCSVLNEMPTVTFTINGIGYQMTPQQYTLQDGGGVCSSGFQGLDIPPPAGPLWILGDVFIGQYYSVFDRGNNRVGLAPVVPYPPLKNGV.

The signal sequence occupies residues 1 to 16 (MRQILVLLLFATLVYG). Residues 17–52 (LIRVPLKRQKSIRKTLKEKGKLSHIWTQQGIDMVQY) constitute a propeptide, activation peptide. Residues 74–385 (YFGEISVGTP…DRGNNRVGLA (312 aa)) enclose the Peptidase A1 domain. An N-linked (GlcNAc...) asparagine glycan is attached at Asn-86. Residue Asp-92 is part of the active site. Cys-105 and Cys-110 form a disulfide bridge. N-linked (GlcNAc...) asparagine glycosylation occurs at Asn-130. Residues Cys-268 and Cys-272 are joined by a disulfide bond. Residue Asp-277 is part of the active site. A disulfide bridge links Cys-310 with Cys-344.

It belongs to the peptidase A1 family. As to quaternary structure, homodimer; disulfide-linked. Post-translationally, glycosylated. Contains high mannose-type oligosaccharide. Expressed predominantly in the larval foregut and the anterior and posterior adult stomach.

It localises to the endosome. The catalysed reaction is Similar to cathepsin D, but slightly broader specificity.. Its function is as follows. May have a role in immune function. Probably involved in the processing of antigenic peptides during MHC class II-mediated antigen presentation. In Xenopus laevis (African clawed frog), this protein is Cathepsin E-A (ctse-a).